We begin with the raw amino-acid sequence, 211 residues long: Large ribosomal subunit protein uL3 (211 aa).

Residues 116 to 142 (GTSGVMKKHGFSGNRASHGVSRNHRLG) form a disordered region.

It belongs to the universal ribosomal protein uL3 family. As to quaternary structure, part of the 50S ribosomal subunit. Forms a cluster with proteins L14 and L19.

Functionally, one of the primary rRNA binding proteins, it binds directly near the 3'-end of the 23S rRNA, where it nucleates assembly of the 50S subunit. This is Large ribosomal subunit protein uL3 from Fusobacterium nucleatum subsp. nucleatum (strain ATCC 25586 / DSM 15643 / BCRC 10681 / CIP 101130 / JCM 8532 / KCTC 2640 / LMG 13131 / VPI 4355).